Here is a 333-residue protein sequence, read N- to C-terminus: tRNA-modifying protein YgfZ (333 aa).

Positions 33 and 195 each coordinate folate.

It belongs to the tRNA-modifying YgfZ family.

The protein resides in the cytoplasm. Folate-binding protein involved in regulating the level of ATP-DnaA and in the modification of some tRNAs. It is probably a key factor in regulatory networks that act via tRNA modification, such as initiation of chromosomal replication. The sequence is that of tRNA-modifying protein YgfZ from Pectobacterium carotovorum subsp. carotovorum (strain PC1).